The following is a 181-amino-acid chain: uncharacterized protein (181 aa).

At 1-14 (MQKCIMRSTEFKTH) the chain is on the cytoplasmic side. The chain crosses the membrane as a helical span at residues 15–35 (FSFHSIFSFPLSAALLALISA). Over 36–58 (SEPASKAFINVQFISSPLVKKEV) the chain is Extracellular. A helical transmembrane segment spans residues 59–79 (LPFIVSFHSLSSNGILSFSPF). The Cytoplasmic segment spans residues 80-84 (TSSNL). Residues 85 to 105 (SIAQLPFLIKVPLLSMGSLAL) form a helical membrane-spanning segment. Residues 106-116 (ENFNKFIPRAD) are Extracellular-facing. A helical transmembrane segment spans residues 117-137 (LVAAWVTIIMVFTFGNFLSTL). The Cytoplasmic portion of the chain corresponds to 138–153 (SIKTGQNLWHLSKISS). A helical membrane pass occupies residues 154–174 (SVSPLLLGIILGSQSGEIMLG). Residues 175–181 (KNLLITS) lie on the Extracellular side of the membrane.

The protein resides in the membrane. This is an uncharacterized protein from Saccharomyces cerevisiae (strain ATCC 204508 / S288c) (Baker's yeast).